A 1373-amino-acid polypeptide reads, in one-letter code: Capping protein, Arp2/3 and myosin-I linker protein 3 (1373 aa).

A disordered region spans residues 126–151 (RGNADTPEGPRDTSPNSETSTSTTHS). Positions 138–151 (TSPNSETSTSTTHS) are enriched in low complexity. LRR repeat units follow at residues 242–269 (SGSLEELVLDNAGLKTDFVQKLAGVFGE), 272–299 (SCVLHALTLSHNPIEDKGFLSLSQQLLC), 333–358 (ASSLRYLDLSKNPGLLATDEANALYS), 390–417 (CSHLTYLNLARNSCSHRKGREAPPAFKQ), 422–446 (AYTLSHVNLSATRLPLEALRALLQG), 453–475 (LSDLHLDLSSCELRSAGAQALQE), 480–507 (VTCIGSLDLSDNGFDSDLLTLVPALGKN), 510–536 (LKHLFLGKNFNVKAKTLEEILHKLVQL), 541–564 (DCSLQSLSVADSRLKLRTSILINA), and 568–591 (NTCLAKVDLSGNGMEDIGAKMLSK). Disordered stretches follow at residues 864-902 (RTLSDPPGGAGPGQDPSSRGRGRSHDHEETDDELGTNID) and 970-1373 (LRHQ…PGTD). The span at 981–997 (PRTTPPGPGRPSVPVPG) shows a compositional bias: pro residues. A compositionally biased stretch (basic and acidic residues) spans 1007 to 1022 (RLDEGLEDFFSRRVMD). Positions 1047–1062 (QKRRRRGLFHFRRPRS) are enriched in basic residues. Over residues 1078–1097 (LPPPPPPPPTQESPPSPDPP) the composition is skewed to pro residues. Residues 1098–1108 (SLGNNSSPCWS) show a composition bias toward low complexity. Residues 1218–1228 (RRAEATWHIAE) show a composition bias toward basic and acidic residues. Residues 1232–1243 (PNHSCQSPSPAS) are compositionally biased toward polar residues. Residues 1269-1278 (PIGPRPPKPV) are compositionally biased toward pro residues. Over residues 1345 to 1358 (QSCDKLEPDRRRPP) the composition is skewed to basic and acidic residues.

It belongs to the CARMIL family. In terms of tissue distribution, widely expressed, with much higher levels in fetal tissues than in adult ones. Highly expressed in newborn brain.

It is found in the cytoplasm. The protein resides in the cell membrane. In Rattus norvegicus (Rat), this protein is Capping protein, Arp2/3 and myosin-I linker protein 3 (Carmil3).